A 335-amino-acid polypeptide reads, in one-letter code: Pro-cathepsin H (335 aa).

The first 22 residues, 1-22, serve as a signal peptide directing secretion; it reads MWATLPLLCAGAWLLGVPVCGA. A propeptide spans 23–97 (activation peptide); it reads AELCVNSLEK…AEIKHKYLWS (75 aa). An N-linked (GlcNAc...) asparagine glycan is attached at Asn101. 4 disulfides stabilise this stretch: Cys102-Cys327, Cys138-Cys181, Cys172-Cys214, and Cys272-Cys322. A propeptide spanning residues 106 to 115 is cleaved from the precursor; the sequence is KSNYLRGTGP. Cys141 is an active-site residue. N-linked (GlcNAc...) asparagine glycosylation occurs at Asn230. Residues His281 and Asn301 contribute to the active site.

It belongs to the peptidase C1 family. In terms of assembly, composed of a mini chain and a large chain. The large chain may be split into heavy and light chain. All chains are held together by disulfide bonds.

The protein resides in the lysosome. The catalysed reaction is Hydrolysis of proteins, acting as an aminopeptidase (notably, cleaving Arg-|-Xaa bonds) as well as an endopeptidase.. In terms of biological role, important for the overall degradation of proteins in lysosomes. This Homo sapiens (Human) protein is Pro-cathepsin H (CTSH).